A 1155-amino-acid chain; its full sequence is MHC class II transactivator (1155 aa).

Residues 171–210 (AYANIAELDQYVFQDTQLEGLSKDLFIEHIGAEEGFGENI) form a required for acetyltransferase activity region. 2 disordered regions span residues 217–237 (GQKP…KHRK) and 297–357 (SLSI…IKLP). Residues 224–233 (RFPEEHAMDS) show a composition bias toward basic and acidic residues. Positions 439–749 (QVVAVLGKAG…CFLGAVWLAQ (311 aa)) constitute an NACHT domain. 445–452 (GKAGQGKS) lines the GTP pocket. 4 LRR repeats span residues 1010 to 1033 (SLQH…SKLS), 1041 to 1062 (ALET…KLAE), 1070 to 1091 (SLLR…SLAQ), and 1098 to 1119 (SLRV…QLAS).

Interacts with ZXDA and ZXDC. Interacts with PML (isoform PML-2). Interacts with TAF7; interaction inhibits CIITA acetyltransferase activity, thereby repressing transcription. Autophosphorylated, affecting interaction with TAF7. In terms of tissue distribution, expressed at very high levels in dendritic cells, at very low levels in spleen and thymus and is not detected in other tissues. Detected at high levels in spleen and tonsil as well as in a number of B-lymphocyte cell lines, and at very low levels in dendritic cells.

The protein localises to the nucleus. Its subcellular location is the PML body. It catalyses the reaction L-seryl-[protein] + ATP = O-phospho-L-seryl-[protein] + ADP + H(+). The catalysed reaction is L-threonyl-[protein] + ATP = O-phospho-L-threonyl-[protein] + ADP + H(+). Essential for transcriptional activity of the HLA class II promoter; activation is via the proximal promoter. Does not bind DNA. May act in a coactivator-like fashion through protein-protein interactions by contacting factors binding to the proximal MHC class II promoter, to elements of the transcription machinery, or both. Alternatively it may activate HLA class II transcription by modifying proteins that bind to the MHC class II promoter. Also mediates enhanced MHC class I transcription, the promoter element requirements for CIITA-mediated transcription are distinct from those of constitutive MHC class I transcription, and CIITA can functionally replace TAF1 at these genes. Activates CD74 transcription. Exhibits intrinsic GTP-stimulated acetyltransferase activity. Exhibits serine/threonine protein kinase activity: phosphorylates the TFIID component TAF7, the RAP74 subunit of the general transcription factor TFIIF, histone H2B at 'Ser-37' and other histones. In Mus musculus (Mouse), this protein is MHC class II transactivator.